A 241-amino-acid chain; its full sequence is Tetraspanin-1 (241 aa).

At 1 to 11 (MQCFSFIKTMM) the chain is on the cytoplasmic side. Residues 12–32 (ILFNLLIFLCGAALLAVGIWV) traverse the membrane as a helical segment. Over 33-52 (SIDGASFLKIFGPLSSSAMQ) the chain is Extracellular. Residues 53 to 73 (FVNVGYFLIAAGVVVFALGFL) traverse the membrane as a helical segment. Residues 74 to 88 (GCYGAKTESKCALVT) are Cytoplasmic-facing. The helical transmembrane segment at 89 to 109 (FFFILLLIFIAEVAAAVVALV) threads the bilayer. Topologically, residues 110–211 (YTTMAEHFLT…NQLLYDIRTN (102 aa)) are extracellular. 4 N-linked (GlcNAc...) asparagine glycosylation sites follow: N141, N154, N178, and N184. A helical transmembrane segment spans residues 212 to 232 (AVTVGGVAAGIGGLELAAMIV). Residues 233-241 (SMYLYCNLQ) lie on the Cytoplasmic side of the membrane.

The protein belongs to the tetraspanin (TM4SF) family. In terms of assembly, interacts with SLC19A2. Interacts with NTRK1/TRKA.

It is found in the cell membrane. Its subcellular location is the lysosome membrane. Structural component of specialized membrane microdomains known as tetraspanin-enriched microdomains (TERMs), which act as platforms for receptor clustering and signaling. Participates thereby in diverse biological functions such as cell signal transduction, adhesion, migration and protein trafficking. Regulates neuronal differentiation in response to NGF by facilitating NGF-mediated activation of NTRK1/TRKA receptor tyrosine kinase and subsequent downstream signaling pathways. Plays a role in the inhibition of TNFalpha-induced apoptosis. Mechanistically, inhibits the NF-kappa-B signaling pathway by blocking phosphorylation of CHUK. Also promotes the stability of the thiamine transporter 1/SLC19A2 in intestinal epithelial cells leading to an increase of thiamine uptake process. The chain is Tetraspanin-1 (TSPAN1) from Homo sapiens (Human).